The primary structure comprises 760 residues: NAD(P)H-quinone oxidoreductase subunit 5, chloroplastic (760 aa).

Helical transmembrane passes span 9-29 (WIISFVTLPVPMLIGMGLLLF), 39-59 (IWAFPSVLLLSIVMVFSTDLF), 89-109 (IDPLTSILLILITTVGILVLV), 125-145 (FVYMSFFNTSMLGLVTSSNLI), 147-167 (IYIFWELVGMCSYLLIGFWFT), 185-205 (GDFGLLLGILGLYWITGSFEF), 221-241 (NEVHFLFVTLCAFLLFSGAIA), 260-280 (TPISALIHAATMVAAGIFLVA), 282-302 (LLPLFVVIPYIMKLIALIGII), 329-349 (LGYTMLALGMGSYRAALFHLI), 356-376 (ALLFLGSGSIIHSMEGIVGYS), 398-418 (IAFLLGTLSLCGIPPLACFWS), 429-449 (YSPIFAIIAFSTAGLTAFYMF), 556-576 (ILFPMLVLVLFTLFIGAIGIP), 620-640 (FSVSIASFGIFIASSLYKPIY), and 734-754 (FYLLLYLFYVLIFLLISSSIF).

Belongs to the complex I subunit 5 family. NDH is composed of at least 16 different subunits, 5 of which are encoded in the nucleus.

The protein localises to the plastid. Its subcellular location is the chloroplast thylakoid membrane. The catalysed reaction is a plastoquinone + NADH + (n+1) H(+)(in) = a plastoquinol + NAD(+) + n H(+)(out). It carries out the reaction a plastoquinone + NADPH + (n+1) H(+)(in) = a plastoquinol + NADP(+) + n H(+)(out). In terms of biological role, NDH shuttles electrons from NAD(P)H:plastoquinone, via FMN and iron-sulfur (Fe-S) centers, to quinones in the photosynthetic chain and possibly in a chloroplast respiratory chain. The immediate electron acceptor for the enzyme in this species is believed to be plastoquinone. Couples the redox reaction to proton translocation, and thus conserves the redox energy in a proton gradient. The chain is NAD(P)H-quinone oxidoreductase subunit 5, chloroplastic (ndhF) from Populus alba (White poplar).